We begin with the raw amino-acid sequence, 314 residues long: MIKVVFMGTPDFSVPVLRRLIEDGYEVVGVVTQPDRPVGRKKVLTPTPVKVEAEKHGIPVLQPLKIREKDEYEKVLALEPDLIVTAAFGQIVPNEILEAPKYGCINVHASLLPELRGGAPIHYAIMEGKEKTGITIMYMVEKLDAGDILTQVEVEIEERETTGSLFDKLSEAGAHLLSKTVPLLIQGKLEPIKQNEEEVTFAYNIKREQEKIDWTKTGEEVYNHIRGLNPWPVAYTTLAGQVVKVWWGEKVPVTEPAEAGTIVAIEEDGFVVATSNETGVKITELQPSGKKRMSCSQFLRGTKPEIGTKLGENA.

S110 to P113 is a binding site for (6S)-5,6,7,8-tetrahydrofolate.

Belongs to the Fmt family.

The enzyme catalyses L-methionyl-tRNA(fMet) + (6R)-10-formyltetrahydrofolate = N-formyl-L-methionyl-tRNA(fMet) + (6S)-5,6,7,8-tetrahydrofolate + H(+). Its function is as follows. Attaches a formyl group to the free amino group of methionyl-tRNA(fMet). The formyl group appears to play a dual role in the initiator identity of N-formylmethionyl-tRNA by promoting its recognition by IF2 and preventing the misappropriation of this tRNA by the elongation apparatus. The sequence is that of Methionyl-tRNA formyltransferase from Bacillus cereus (strain G9842).